The chain runs to 379 residues: Cytochrome b (379 aa).

Helical transmembrane passes span 33–53 (FGSL…FLAM), 77–98 (WLIR…YFHI), 113–133 (WNMG…GYVL), and 178–198 (FFAF…IHLL). Heme b-binding residues include His-83 and His-97. 2 residues coordinate heme b: His-182 and His-196. His-201 is an a ubiquinone binding site. 4 consecutive transmembrane segments (helical) span residues 226–246 (IKDI…VMFS), 288–308 (LGGV…PILH), 320–340 (LSQC…WIGG), and 347–367 (FITI…ILMP).

This sequence belongs to the cytochrome b family. In terms of assembly, the cytochrome bc1 complex contains 11 subunits: 3 respiratory subunits (MT-CYB, CYC1 and UQCRFS1), 2 core proteins (UQCRC1 and UQCRC2) and 6 low-molecular weight proteins (UQCRH/QCR6, UQCRB/QCR7, UQCRQ/QCR8, UQCR10/QCR9, UQCR11/QCR10 and a cleavage product of UQCRFS1). This cytochrome bc1 complex then forms a dimer. It depends on heme b as a cofactor.

It localises to the mitochondrion inner membrane. In terms of biological role, component of the ubiquinol-cytochrome c reductase complex (complex III or cytochrome b-c1 complex) that is part of the mitochondrial respiratory chain. The b-c1 complex mediates electron transfer from ubiquinol to cytochrome c. Contributes to the generation of a proton gradient across the mitochondrial membrane that is then used for ATP synthesis. The protein is Cytochrome b (MT-CYB) of Ctenomys leucodon (White-toothed tuco-tuco).